The following is a 448-amino-acid chain: Phosphoglucosamine mutase (448 aa).

Residue serine 89 is the Phosphoserine intermediate of the active site. Positions 89, 232, 234, and 236 each coordinate Mg(2+). Serine 89 carries the phosphoserine modification.

It belongs to the phosphohexose mutase family. In terms of assembly, forms large aggregates. Mg(2+) is required as a cofactor. Post-translationally, activated by phosphorylation.

It catalyses the reaction alpha-D-glucosamine 1-phosphate = D-glucosamine 6-phosphate. Its function is as follows. Catalyzes the conversion of glucosamine-6-phosphate to glucosamine-1-phosphate. In Methanocaldococcus jannaschii (strain ATCC 43067 / DSM 2661 / JAL-1 / JCM 10045 / NBRC 100440) (Methanococcus jannaschii), this protein is Phosphoglucosamine mutase (glmM).